A 940-amino-acid chain; its full sequence is Isoleucine--tRNA ligase (940 aa).

Positions 58–68 (PYANGSIHIGH) match the 'HIGH' region motif. L-isoleucyl-5'-AMP is bound at residue Glu-564. A 'KMSKS' region motif is present at residues 605–609 (KMSKS). ATP is bound at residue Lys-608. Residues Cys-903, Cys-906, Cys-923, and Cys-926 each contribute to the Zn(2+) site.

This sequence belongs to the class-I aminoacyl-tRNA synthetase family. IleS type 1 subfamily. As to quaternary structure, monomer. The cofactor is Zn(2+).

The protein localises to the cytoplasm. It catalyses the reaction tRNA(Ile) + L-isoleucine + ATP = L-isoleucyl-tRNA(Ile) + AMP + diphosphate. Catalyzes the attachment of isoleucine to tRNA(Ile). As IleRS can inadvertently accommodate and process structurally similar amino acids such as valine, to avoid such errors it has two additional distinct tRNA(Ile)-dependent editing activities. One activity is designated as 'pretransfer' editing and involves the hydrolysis of activated Val-AMP. The other activity is designated 'posttransfer' editing and involves deacylation of mischarged Val-tRNA(Ile). The polypeptide is Isoleucine--tRNA ligase (Shewanella baltica (strain OS185)).